We begin with the raw amino-acid sequence, 184 residues long: Large ribosomal subunit protein bL9 (184 aa).

The tract at residues 156–184 is disordered; that stretch reads RQAKLQNQKSEQQEAEQDASKEAADADDS. Positions 173–184 are enriched in basic and acidic residues; it reads DASKEAADADDS.

This sequence belongs to the bacterial ribosomal protein bL9 family.

Binds to the 23S rRNA. This Wolbachia pipientis subsp. Culex pipiens (strain wPip) protein is Large ribosomal subunit protein bL9.